A 295-amino-acid polypeptide reads, in one-letter code: Small ribosomal subunit protein uS2 (295 aa).

This sequence belongs to the universal ribosomal protein uS2 family. In terms of assembly, component of the small ribosomal subunit. Mature ribosomes consist of a small (40S) and a large (60S) subunit. The 40S subunit contains about 33 different proteins and 1 molecule of RNA (18S). The 60S subunit contains about 49 different proteins and 3 molecules of RNA (25S, 5.8S and 5S). Interacts with RPS21.

The protein localises to the cytoplasm. Functionally, required for the assembly and/or stability of the 40S ribosomal subunit. Required for the processing of the 20S rRNA-precursor to mature 18S rRNA in a late step of the maturation of 40S ribosomal subunits. The polypeptide is Small ribosomal subunit protein uS2 (Paracoccidioides brasiliensis (strain Pb03)).